A 175-amino-acid chain; its full sequence is Ribulose bisphosphate carboxylase small subunit, chloroplastic 2 (175 aa).

A chloroplast-targeting transit peptide spans 1–46 (MAPTVMASSATSVAPFQGLKSTAGLPVSRRSTNSGFGNVSNGGRIK).

The protein belongs to the RuBisCO small chain family. In terms of assembly, heterohexadecamer of 8 large and 8 small subunits.

The protein localises to the plastid. The protein resides in the chloroplast. Functionally, ruBisCO catalyzes two reactions: the carboxylation of D-ribulose 1,5-bisphosphate, the primary event in carbon dioxide fixation, as well as the oxidative fragmentation of the pentose substrate. Both reactions occur simultaneously and in competition at the same active site. Although the small subunit is not catalytic it is essential for maximal activity. The polypeptide is Ribulose bisphosphate carboxylase small subunit, chloroplastic 2 (Oryza sativa subsp. japonica (Rice)).